Reading from the N-terminus, the 314-residue chain is tRNA dimethylallyltransferase (314 aa).

6–13 provides a ligand contact to ATP; it reads GPTAVGKT. 8-13 is a substrate binding site; sequence TAVGKT. Positions 31–34 are interaction with substrate tRNA; it reads DSRQ.

Belongs to the IPP transferase family. As to quaternary structure, monomer. Mg(2+) is required as a cofactor.

The enzyme catalyses adenosine(37) in tRNA + dimethylallyl diphosphate = N(6)-dimethylallyladenosine(37) in tRNA + diphosphate. Its function is as follows. Catalyzes the transfer of a dimethylallyl group onto the adenine at position 37 in tRNAs that read codons beginning with uridine, leading to the formation of N6-(dimethylallyl)adenosine (i(6)A). The polypeptide is tRNA dimethylallyltransferase (Pseudothermotoga lettingae (strain ATCC BAA-301 / DSM 14385 / NBRC 107922 / TMO) (Thermotoga lettingae)).